The chain runs to 621 residues: Nitrate reductase [NADH] 1 (621 aa).

Positions 249-324 (GKEFTMSEVR…LDTYRIGELI (76 aa)) constitute a Cytochrome b5 heme-binding domain. 2 residues coordinate heme: His-284 and His-307. The FAD-binding FR-type domain maps to 361-473 (REKIHCRLVG…KGPLGHVEYT (113 aa)). Residues 413 to 416 (RAYT), 430 to 432 (LVK), Phe-435, 447 to 449 (LMT), Ser-497, and Thr-500 each bind FAD.

This sequence belongs to the nitrate reductase family. As to quaternary structure, homodimer. It depends on FAD as a cofactor. Heme is required as a cofactor. Requires Mo-molybdopterin as cofactor.

It carries out the reaction nitrite + NAD(+) + H2O = nitrate + NADH + H(+). In terms of biological role, nitrate reductase is a key enzyme involved in the first step of nitrate assimilation in plants, fungi and bacteria. The chain is Nitrate reductase [NADH] 1 from Zea mays (Maize).